The following is a 284-amino-acid chain: Ermin (284 aa).

Residues 1-61 form a disordered region; that stretch reads MTDVPATFTQ…APTKGSQEER (61 aa). A Phosphoserine modification is found at serine 73. The disordered stretch occupies residues 108-251; the sequence is TFREGRQWEK…PTLGKKSDIS (144 aa). Basic and acidic residues-rich tracts occupy residues 126–140 and 171–183; these read EIRRQKERITEQPLK and LHSKHDEEQKVWD. The segment covering 184–200 has biased composition (acidic residues); that stretch reads EEIDDDDDDNCNDDEDE. Basic and acidic residues predominate over residues 201-220; sequence VRVIEFKKKHEEVSQFKEEG. Phosphoserine is present on residues serine 214, serine 226, serine 230, and serine 233. Positions 225-235 are enriched in low complexity; the sequence is DSPLSSASSQA. Threonine 237 carries the phosphothreonine modification. The interval 265 to 284 is binds actin; the sequence is KIRKGNTKQRIDEFESMMHL.

Binds actin.

It localises to the cytoplasm. It is found in the cytoskeleton. Its function is as follows. Plays a role in cytoskeletal rearrangements during the late wrapping and/or compaction phases of myelinogenesis as well as in maintenance and stability of myelin sheath in the adult. May play an important role in late-stage oligodendroglia maturation, myelin/Ranvier node formation during CNS development, and in the maintenance and plasticity of related structures in the mature CNS. The protein is Ermin (ERMN) of Pongo abelii (Sumatran orangutan).